A 130-amino-acid chain; its full sequence is Small ribosomal subunit protein uS9 (130 aa).

It belongs to the universal ribosomal protein uS9 family.

The sequence is that of Small ribosomal subunit protein uS9 from Streptococcus gordonii (strain Challis / ATCC 35105 / BCRC 15272 / CH1 / DL1 / V288).